The primary structure comprises 334 residues: DNA-directed RNA polymerase subunit alpha (334 aa).

An alpha N-terminal domain (alpha-NTD) region spans residues 1–233 (MADQTISNVL…NLFTPLVSQE (233 aa)). Positions 263 to 334 (DNENSYNLYN…QLKKRFKIQL (72 aa)) are alpha C-terminal domain (alpha-CTD).

It belongs to the RNA polymerase alpha chain family. As to quaternary structure, in plastids the minimal PEP RNA polymerase catalytic core is composed of four subunits: alpha, beta, beta', and beta''. When a (nuclear-encoded) sigma factor is associated with the core the holoenzyme is formed, which can initiate transcription.

Its subcellular location is the plastid. It is found in the chloroplast. It catalyses the reaction RNA(n) + a ribonucleoside 5'-triphosphate = RNA(n+1) + diphosphate. Its function is as follows. DNA-dependent RNA polymerase catalyzes the transcription of DNA into RNA using the four ribonucleoside triphosphates as substrates. The chain is DNA-directed RNA polymerase subunit alpha from Chaetosphaeridium globosum (Charophycean green alga).